An 865-amino-acid chain; its full sequence is Alanine--tRNA ligase (865 aa).

His554, His558, Cys656, and His660 together coordinate Zn(2+).

This sequence belongs to the class-II aminoacyl-tRNA synthetase family. Zn(2+) is required as a cofactor.

It is found in the cytoplasm. The enzyme catalyses tRNA(Ala) + L-alanine + ATP = L-alanyl-tRNA(Ala) + AMP + diphosphate. Its function is as follows. Catalyzes the attachment of alanine to tRNA(Ala) in a two-step reaction: alanine is first activated by ATP to form Ala-AMP and then transferred to the acceptor end of tRNA(Ala). Also edits incorrectly charged Ser-tRNA(Ala) and Gly-tRNA(Ala) via its editing domain. The sequence is that of Alanine--tRNA ligase from Francisella tularensis subsp. novicida (strain U112).